The chain runs to 438 residues: Na(+)/H(+) antiporter NhaA 2 (438 aa).

A run of 11 helical transmembrane segments spans residues 21 to 41 (SGGI…NSPW), 66 to 86 (LHHW…GLEL), 102 to 122 (MLPI…FHFI), 130 to 150 (KGWG…LALL), 160 to 180 (IFLT…IALF), 183 to 203 (GELA…LIAG), 206 to 226 (LGVQ…VVLL), 308 to 328 (WVIF…VLQL), 341 to 361 (LGVA…FSWI), 376 to 396 (WMDV…SLFI), and 410 to 430 (AKLG…TVLS).

This sequence belongs to the NhaA Na(+)/H(+) (TC 2.A.33) antiporter family.

It is found in the cell inner membrane. The catalysed reaction is Na(+)(in) + 2 H(+)(out) = Na(+)(out) + 2 H(+)(in). Its function is as follows. Na(+)/H(+) antiporter that extrudes sodium in exchange for external protons. In Syntrophotalea carbinolica (strain DSM 2380 / NBRC 103641 / GraBd1) (Pelobacter carbinolicus), this protein is Na(+)/H(+) antiporter NhaA 2.